The primary structure comprises 214 residues: MSKSVALLLLCACLASGRHVPTRARRQAGSFTVNSDGTSGAALKVPLTGNDKNVLSAIGSADFNDRHKLSAASAGLALDNVNGHGLSLTGTRIPGFGEQLGVAGKVNLFHNNNHDLSAKAFAIRNSPSAIPNAPNFNTLGGGVDYMFKQKVGASLSAAHSDVINRNDYSAGGKLNLFRSPSSSLDFNAGFKKFDTPFYRSSWEPNVGFSFSKFF.

The first 19 residues, 1 to 19 (MSKSVALLLLCACLASGRH), serve as a signal peptide directing secretion. A propeptide spanning residues 20–26 (VPTRARR) is cleaved from the precursor.

This sequence belongs to the attacin/sarcotoxin-2 family. In terms of tissue distribution, highest expression in fat body and hemocytes and to a much lesser extent in Malpighian tubules, silk gland and midgut.

Its subcellular location is the secreted. In terms of biological role, hemolymph antibacterial protein. Has a wide spectrum of activity against both Gram-positive and Gram-negative bacteria. This chain is Attacin, found in Bombyx mori (Silk moth).